We begin with the raw amino-acid sequence, 115 residues long: Ribosome-binding factor A (115 aa).

Belongs to the RbfA family. In terms of assembly, monomer. Binds 30S ribosomal subunits, but not 50S ribosomal subunits or 70S ribosomes.

It localises to the cytoplasm. Functionally, one of several proteins that assist in the late maturation steps of the functional core of the 30S ribosomal subunit. Associates with free 30S ribosomal subunits (but not with 30S subunits that are part of 70S ribosomes or polysomes). Required for efficient processing of 16S rRNA. May interact with the 5'-terminal helix region of 16S rRNA. The sequence is that of Ribosome-binding factor A from Bacillus velezensis (strain DSM 23117 / BGSC 10A6 / LMG 26770 / FZB42) (Bacillus amyloliquefaciens subsp. plantarum).